A 371-amino-acid polypeptide reads, in one-letter code: Vasculin (371 aa).

This sequence belongs to the vasculin family.

The protein localises to the nucleus. Its function is as follows. Functions as a GC-rich promoter-specific transactivating transcription factor. The protein is Vasculin (gpbp1) of Xenopus laevis (African clawed frog).